The sequence spans 65 residues: Large ribosomal subunit protein uL29 (65 aa).

This sequence belongs to the universal ribosomal protein uL29 family.

This Lactobacillus delbrueckii subsp. bulgaricus (strain ATCC 11842 / DSM 20081 / BCRC 10696 / JCM 1002 / NBRC 13953 / NCIMB 11778 / NCTC 12712 / WDCM 00102 / Lb 14) protein is Large ribosomal subunit protein uL29.